The following is a 193-amino-acid chain: uncharacterized protein (193 aa).

The segment at 55 to 94 is disordered; the sequence is PVGGAAGARSLSQALPAPAPPPPPPPGLGPSSERPWPSPW. Positions 71–82 are enriched in pro residues; that stretch reads APAPPPPPPPGL.

This is an uncharacterized protein from Homo sapiens (Human).